We begin with the raw amino-acid sequence, 587 residues long: Zinc finger protein 496 (587 aa).

Residues 1–40 (MPTALCPRVLAPKESEEPRKMRSPPGENPSPQGELPSPES) are disordered. Residues 11–20 (APKESEEPRK) are compositionally biased toward basic and acidic residues. Lys-13 is covalently cross-linked (Glycyl lysine isopeptide (Lys-Gly) (interchain with G-Cter in SUMO2)). The 83-residue stretch at 42 to 124 (RRLFRRFRYQ…AAVEALEREP (83 aa)) folds into the SCAN box domain. Phosphoserine is present on Ser-185. The KRAB domain maps to 221 to 291 (SPFKDMILCF…ELQDLQGKEV (71 aa)). The segment at 260–282 (PPNDLAAQPDLSQGEENEPRVPE) is disordered. The residue at position 299 (Ser-299) is a Phosphoserine. A disordered region spans residues 358–399 (SSSGDEDSQHGPYCTEELGSPTEKQRSLPASHRSSTEAGGEV). The segment covering 389-399 (HRSSTEAGGEV) has biased composition (polar residues). Lys-403 is covalently cross-linked (Glycyl lysine isopeptide (Lys-Gly) (interchain with G-Cter in SUMO2)). A C2H2-type 1; degenerate zinc finger spans residues 406-428 (YVCPNCGKIFRWRVNFIRHLRSR). 2 C2H2-type zinc fingers span residues 435 to 457 (HECS…LESH) and 463 to 485 (YRCG…RRIH). The segment at 488–513 (PDRLQPVEKREQAASEDADKGPKEPL) is disordered. Lys-496 participates in a covalent cross-link: Glycyl lysine isopeptide (Lys-Gly) (interchain with G-Cter in SUMO2). 2 C2H2-type zinc fingers span residues 522 to 545 (FQCC…SHFH) and 553 to 575 (FQCR…ERLH).

It belongs to the krueppel C2H2-type zinc-finger protein family. As to quaternary structure, interacts (via zinc-fingers) with JARID2. Interacts with NSD1.

It is found in the nucleus. DNA-binding transcription factor that can both act as an activator and a repressor. The protein is Zinc finger protein 496 (ZNF496) of Homo sapiens (Human).